Reading from the N-terminus, the 642-residue chain is Threonine--tRNA ligase (642 aa).

The TGS domain maps to 1–61; the sequence is MPVITLPDGS…DADATVAIIT (61 aa). Residues 243-534 form a catalytic region; it reads DHRKIGKQLD…LTEEFAGFFP (292 aa). The Zn(2+) site is built by Cys-334, His-385, and His-511.

This sequence belongs to the class-II aminoacyl-tRNA synthetase family. As to quaternary structure, homodimer. Zn(2+) serves as cofactor.

Its subcellular location is the cytoplasm. It catalyses the reaction tRNA(Thr) + L-threonine + ATP = L-threonyl-tRNA(Thr) + AMP + diphosphate + H(+). In terms of biological role, catalyzes the attachment of threonine to tRNA(Thr) in a two-step reaction: L-threonine is first activated by ATP to form Thr-AMP and then transferred to the acceptor end of tRNA(Thr). Also edits incorrectly charged L-seryl-tRNA(Thr). In Edwardsiella ictaluri (strain 93-146), this protein is Threonine--tRNA ligase.